The chain runs to 1128 residues: Apoptosis-stimulating of p53 protein 2 (1128 aa).

The interval 85–120 (PPNRDIVSGPRSQDPSVKRNGVKVPGEHRRKENGVN) is disordered. The tract at residues 332 to 348 (NLPQQAVSAPSRVAAVG) is interaction with APPBP1. The interval 393-436 (MRSGAASQSKGSKAHPASPDWNPSNADLLPSQGSSVPQSAGTAL) is disordered. Positions 413 to 433 (WNPSNADLLPSQGSSVPQSAG) are enriched in polar residues. A phosphoserine mark is found at Ser479, Ser555, Ser568, Ser571, and Ser575. Disordered stretches follow at residues 549-596 (QARM…FPPA) and 654-705 (NPQQ…LPFL). The span at 562-574 (GQDQVLSPASKQE) shows a compositional bias: polar residues. Positions 654–669 (NPQQHPENIYSCSQGK) are enriched in polar residues. Basic and acidic residues predominate over residues 684-693 (HESHENERIP). Ser697, Ser713, and Ser736 each carry phosphoserine. 3 disordered regions span residues 723–748 (KLSNAPRPLKKRSSITEPEGPNGPNI), 802–824 (SLVPEPLSPEDMGSASTENSDVP), and 870–907 (PPPPYPSGEPEVSEEDSARMRPPEITGQVSLPPGKRTN). The short motif at 866–875 (YPPYPPPPYP) is the SH3-binding element. The mediates interaction with APC2 stretch occupies residues 876-1128 (SGEPEVSEED…RIKPRQRSLA (253 aa)). 2 ANK repeats span residues 958–987 (EGITALHNAVCAGHTEIVKFLVQFGVNVNA) and 991–1020 (DGWTPLHCAASCNNVQVCKFLVESGAAVFA). Residues 1057 to 1119 (MNKGVIYALW…PRNLLGLYPR (63 aa)) enclose the SH3 domain.

This sequence belongs to the ASPP family. Interacts with P53/TP53; the interaction promotes pro-apoptotic activity. Interacts with BCL2. Interacts with protein phosphatase 1. Interacts with RELA NF-kappa-B subunit. This interaction probably prevents the activation of apoptosis, possibly by preventing its interaction with p53/TP53. Interacts with APC2 and APPBP1. Interacts with DDX42 (via the C-terminus); the interaction is not inhibited by TP53BP2 ubiquitination and is independent of p53/TP53.

Its subcellular location is the cytoplasm. It is found in the perinuclear region. The protein resides in the nucleus. In terms of biological role, regulator that plays a central role in regulation of apoptosis and cell growth via its interactions with proteins such as TP53. Regulates p53/TP53 by enhancing the DNA binding and transactivation function of p53/TP53 on the promoters of proapoptotic genes in vivo. Inhibits the ability of APPBP1 to conjugate NEDD8 to CUL1, and thereby decreases APPBP1 ability to induce apoptosis. Impedes cell cycle progression at G2/M. Its apoptosis-stimulating activity is inhibited by its interaction with DDX42. The polypeptide is Apoptosis-stimulating of p53 protein 2 (Tp53bp2) (Mus musculus (Mouse)).